The chain runs to 716 residues: Photosystem I P700 chlorophyll a apoprotein A1 (716 aa).

8 helical membrane passes run 57–80, 143–166, 182–206, 278–296, 333–356, 372–398, 420–442, and 518–536; these read VFSAHFGQLAIILIWLSGMYFHGA, LYCTAIGGLIFAGLMLFAGWFHYH, LNHHLAGLLGLGSLSWAGHQVHVSL, TVHHHLAIAILFLIAGHMY, WHAQLALNLAMLGSLTIVVAHHMY, LSLFTHHMWIGGFLIVGAAAHAAIFMV, AIISHLNWVCIFLGFHSFGLYIH, and FLVHHIHAFTIHVTVLILL. 2 residues coordinate [4Fe-4S] cluster: Cys560 and Cys569. Helical transmembrane passes span 576–597 and 651–673; these read HVFLGLFWMYNAISVVIFHFSW and LSAYGLLFLGAHFVWAFSLMFLF. His662 provides a ligand contact to chlorophyll a'. Positions 670 and 678 each coordinate chlorophyll a. Trp679 provides a ligand contact to phylloquinone. A helical membrane pass occupies residues 711-716; that stretch reads AVGVAH.

The protein belongs to the PsaA/PsaB family. In terms of assembly, the PsaA/B heterodimer binds the P700 chlorophyll special pair and subsequent electron acceptors. PSI consists of a core antenna complex that captures photons, and an electron transfer chain that converts photonic excitation into a charge separation. The eukaryotic PSI reaction center is composed of at least 11 subunits. The cofactor is P700 is a chlorophyll a/chlorophyll a' dimer, A0 is one or more chlorophyll a, A1 is one or both phylloquinones and FX is a shared 4Fe-4S iron-sulfur center..

The protein localises to the plastid. It localises to the chloroplast thylakoid membrane. It carries out the reaction reduced [plastocyanin] + hnu + oxidized [2Fe-2S]-[ferredoxin] = oxidized [plastocyanin] + reduced [2Fe-2S]-[ferredoxin]. Functionally, psaA and PsaB bind P700, the primary electron donor of photosystem I (PSI), as well as the electron acceptors A0, A1 and FX. PSI is a plastocyanin-ferredoxin oxidoreductase, converting photonic excitation into a charge separation, which transfers an electron from the donor P700 chlorophyll pair to the spectroscopically characterized acceptors A0, A1, FX, FA and FB in turn. Oxidized P700 is reduced on the lumenal side of the thylakoid membrane by plastocyanin. The sequence is that of Photosystem I P700 chlorophyll a apoprotein A1 from Araucaria araucana (Monkey-puzzle tree).